The following is a 380-amino-acid chain: Cytochrome b (380 aa).

Helical transmembrane passes span 33–53 (FGSL…FLAM), 77–98 (WMIR…FLHI), 113–133 (WNIG…GYVL), and 178–198 (FFTL…LHLL). H83 and H97 together coordinate heme b. 2 residues coordinate heme b: H182 and H196. A ubiquinone is bound at residue H201. 4 consecutive transmembrane segments (helical) span residues 226–246 (IKDI…TLLS), 288–308 (LGGV…PALH), 320–340 (LSQF…WIGG), and 347–367 (FITI…LLMP).

The protein belongs to the cytochrome b family. The cytochrome bc1 complex contains 11 subunits: 3 respiratory subunits (MT-CYB, CYC1 and UQCRFS1), 2 core proteins (UQCRC1 and UQCRC2) and 6 low-molecular weight proteins (UQCRH/QCR6, UQCRB/QCR7, UQCRQ/QCR8, UQCR10/QCR9, UQCR11/QCR10 and a cleavage product of UQCRFS1). This cytochrome bc1 complex then forms a dimer. The cofactor is heme b.

The protein localises to the mitochondrion inner membrane. Functionally, component of the ubiquinol-cytochrome c reductase complex (complex III or cytochrome b-c1 complex) that is part of the mitochondrial respiratory chain. The b-c1 complex mediates electron transfer from ubiquinol to cytochrome c. Contributes to the generation of a proton gradient across the mitochondrial membrane that is then used for ATP synthesis. This chain is Cytochrome b (MT-CYB), found in Pongo pygmaeus (Bornean orangutan).